We begin with the raw amino-acid sequence, 510 residues long: 2-isopropylmalate synthase (510 aa).

The region spanning 5–267 (LVIFDTTLRD…DTRIDTTQIV (263 aa)) is the Pyruvate carboxyltransferase domain. Positions 14, 202, 204, and 238 each coordinate Mn(2+). Residues 392-510 (RLLSLVAHSE…SSLERTHPQV (119 aa)) form a regulatory domain region.

The protein belongs to the alpha-IPM synthase/homocitrate synthase family. LeuA type 1 subfamily. As to quaternary structure, homodimer. The cofactor is Mn(2+).

Its subcellular location is the cytoplasm. The enzyme catalyses 3-methyl-2-oxobutanoate + acetyl-CoA + H2O = (2S)-2-isopropylmalate + CoA + H(+). Its pathway is amino-acid biosynthesis; L-leucine biosynthesis; L-leucine from 3-methyl-2-oxobutanoate: step 1/4. Its function is as follows. Catalyzes the condensation of the acetyl group of acetyl-CoA with 3-methyl-2-oxobutanoate (2-ketoisovalerate) to form 3-carboxy-3-hydroxy-4-methylpentanoate (2-isopropylmalate). The protein is 2-isopropylmalate synthase of Nitrosomonas eutropha (strain DSM 101675 / C91 / Nm57).